We begin with the raw amino-acid sequence, 520 residues long: MVSIDLTTIPEEPGCYQFKDETGTILYVGKAKNLKKRVSSYFQKKSITPRIDILVSLIRDIDVIVTSSEVEALILENNLIKKYQPKYNIDLKDAKSYAFIQISNDPFPRIGIARDRTVKKTGTLYGPFVSAAERDQILKFVKQTFHLRTCKKMTKRACLRSHLGTCAAPCTGKISEPEYQYLVKSADYLLKGKSQDLIYDLRKEMETFAAAEEYEKALVIRDRIAAIENLSERQYVQRQKKSDEHIINYLVSGDTVYLILFHVERGSLTSKEEFVFPETEDFLDEFILQYYSSTKPPNELILPSLPGSGMEEYLTHIRGSHVTLTIPKQGEKKHLLDLAYKNLEVSFFTGKMRLAELGEALHMDTAPEVIECFDISHLRGTGTVASMVSFRDGKPDKRNYRRYKINSAGPSDDYAAMAEVVKRRYSRLLREKSPMPDLIVVDGGPGQLKSAHAILEELSLPIPIISIAKREEEIYIPGRNTPLSIQKKSPASLLIQEIRDEAHRFAITYQKKLRQKSIKE.

Residues 11-89 (EEPGCYQFKD…IKKYQPKYNI (79 aa)) form the GIY-YIG domain. Positions 195–230 (QDLIYDLRKEMETFAAAEEYEKALVIRDRIAAIENL) constitute a UVR domain.

This sequence belongs to the UvrC family. As to quaternary structure, interacts with UvrB in an incision complex.

It is found in the cytoplasm. The UvrABC repair system catalyzes the recognition and processing of DNA lesions. UvrC both incises the 5' and 3' sides of the lesion. The N-terminal half is responsible for the 3' incision and the C-terminal half is responsible for the 5' incision. This Methanospirillum hungatei JF-1 (strain ATCC 27890 / DSM 864 / NBRC 100397 / JF-1) protein is UvrABC system protein C.